The chain runs to 424 residues: Galacturonokinase (424 aa).

Residue serine 2 is modified to N-acetylserine. An ATP-binding site is contributed by aspartate 146 to alanine 155. Aspartate 197 acts as the Proton acceptor in catalysis.

This sequence belongs to the GHMP kinase family. Requires Mg(2+) as cofactor. It depends on Mn(2+) as a cofactor. Ca(2+) is required as a cofactor. As to expression, expressed in roots, stems, leaves, flowers and young siliques. Higher expression in the elongating middle stem region than in the lower or upper stem region.

The catalysed reaction is D-galacturonate + ATP = 1-phospho-alpha-D-galacturonate + ADP + H(+). Its activity is regulated as follows. Inhibited by EDTA and ADP. Its function is as follows. Sugar-1-kinase with a strict substrate specificity for the alpha-anomeric configuration of D-galacturonic acid (D-GalA) and ATP. Involved in the biosynthesis of UDP-galacturonic acid (UDP-GalA) from the salvaged GalA that is released during growth-dependent cell wall restructuring. The sequence is that of Galacturonokinase (GALAK) from Arabidopsis thaliana (Mouse-ear cress).